A 711-amino-acid polypeptide reads, in one-letter code: MLNPIVRKFQYGQHTVTLETGMMARQATAAVMVSMDDTAVFVTVVGQKKAKPGQDFFPLTVNYQERTYAAGRIPGSFFRREGRPSEGETLIARLIDRPIRPLFPEGFVNEVQVIATVVSVNPQVNPDIVAMIGASAALSLSGIPFNGPNGAARVGYINDQYVLNPTQDELKESKLDLVVAGTEAAVLMVESEAELLSEDQMLGAVVFGHEQQQVVIQNINELVKEAGKPRWDWQPEPVNEALNARVAALAEARLSDAYRITDKQERYAQVDVIKSETIATLLAEDETLDENELGEILHAIEKNVVRSRVLAGEPRIDGREKDMIRGLDVRTGVLPRTHGSALFTRGETQALVTATLGTARDAQVLDELMGERTDTFLFHYNFPPYSVGETGMVGSPKRREIGHGRLAKRGVLAVMPDMDKFPYTVRVVSEITESNGSSSMASVCGASLALMDAGVPIKAAVAGIAMGLVKEGDNYVVLSDILGDEDHLGDMDFKVAGSRDGISALQMDIKIEGITKEIMQVALNQAKGARLHILGVMEQAINAPRGDISEFAPRIHTIKINPDKIKDVIGKGGSVIRALTEETGTTIEIEDDGTVKIAATDGEKAKHAIRRIEEITAEIEVGRVYNGKVTRIVDFGAFVAIGGGKEGLVHISQIADKRVEKVTDYLQMGQEVPVKVLEVDRQGRIRLSIKEATEQSQPAAALEAPAAEQGE.

Residues Asp486 and Asp492 each coordinate Mg(2+). The KH domain occupies 553–612 (PRIHTIKINPDKIKDVIGKGGSVIRALTEETGTTIEIEDDGTVKIAATDGEKAKHAIRRI). Residues 622 to 690 (GRVYNGKVTR…RQGRIRLSIK (69 aa)) enclose the S1 motif domain. The segment at 690–711 (KEATEQSQPAAALEAPAAEQGE) is disordered. The span at 698–711 (PAAALEAPAAEQGE) shows a compositional bias: low complexity.

It belongs to the polyribonucleotide nucleotidyltransferase family. In terms of assembly, component of the RNA degradosome, which is a multiprotein complex involved in RNA processing and mRNA degradation. Mg(2+) is required as a cofactor.

The protein localises to the cytoplasm. It catalyses the reaction RNA(n+1) + phosphate = RNA(n) + a ribonucleoside 5'-diphosphate. Functionally, involved in mRNA degradation. Catalyzes the phosphorolysis of single-stranded polyribonucleotides processively in the 3'- to 5'-direction. The sequence is that of Polyribonucleotide nucleotidyltransferase from Escherichia coli O127:H6 (strain E2348/69 / EPEC).